The primary structure comprises 235 residues: tRNA pseudouridine synthase B (235 aa).

Catalysis depends on Asp-48, which acts as the Nucleophile.

It belongs to the pseudouridine synthase TruB family. Type 1 subfamily.

It catalyses the reaction uridine(55) in tRNA = pseudouridine(55) in tRNA. Its function is as follows. Responsible for synthesis of pseudouridine from uracil-55 in the psi GC loop of transfer RNAs. The polypeptide is tRNA pseudouridine synthase B (Parabacteroides distasonis (strain ATCC 8503 / DSM 20701 / CIP 104284 / JCM 5825 / NCTC 11152)).